We begin with the raw amino-acid sequence, 239 residues long: Uridylate kinase (239 aa).

Position 10-13 (10-13) interacts with ATP; the sequence is KFSG. The tract at residues 18 to 23 is involved in allosteric activation by GTP; it reads GENGFG. Position 52 (Gly-52) interacts with UMP. Residues Gly-53 and Arg-57 each contribute to the ATP site. UMP-binding positions include Asp-73 and 134 to 141; that span reads TGNPYFTT. Residues Thr-161, Tyr-167, and Asp-170 each contribute to the ATP site.

The protein belongs to the UMP kinase family. As to quaternary structure, homohexamer.

It localises to the cytoplasm. The catalysed reaction is UMP + ATP = UDP + ADP. Its pathway is pyrimidine metabolism; CTP biosynthesis via de novo pathway; UDP from UMP (UMPK route): step 1/1. With respect to regulation, allosterically activated by GTP. Inhibited by UTP. Catalyzes the reversible phosphorylation of UMP to UDP. In Campylobacter jejuni subsp. jejuni serotype O:6 (strain 81116 / NCTC 11828), this protein is Uridylate kinase.